We begin with the raw amino-acid sequence, 49 residues long: Osteocalcin (49 aa).

Q1 carries the pyrrolidone carboxylic acid modification. Residues 1–47 (QLINGQGAPAPYPDPLEPKREVCELNPDCDELADQVGLQDAYQRFYG) form the Gla domain. P9 is subject to 4-hydroxyproline. Residues E17, E21, E24, and D30 each contribute to the Ca(2+) site. 4-carboxyglutamate occurs at positions 17, 21, and 24. A disulfide bridge connects residues C23 and C29.

It belongs to the osteocalcin/matrix Gla protein family. In terms of processing, gamma-carboxyglutamate residues are formed by vitamin K dependent carboxylation by GGCX. These residues are essential for the binding of calcium. Decarboxylation promotes the hormone activity.

It localises to the secreted. Functionally, the carboxylated form is one of the main organic components of the bone matrix, which constitutes 1-2% of the total bone protein: it acts as a negative regulator of bone formation and is required to limit bone formation without impairing bone resorption or mineralization. The carboxylated form binds strongly to apatite and calcium. Its function is as follows. The uncarboxylated form acts as a hormone secreted by osteoblasts, which regulates different cellular processes, such as energy metabolism, male fertility and brain development. Regulates of energy metabolism by acting as a hormone favoring pancreatic beta-cell proliferation, insulin secretion and sensitivity and energy expenditure. Uncarboxylated osteocalcin hormone also promotes testosterone production in the testes: acts as a ligand for G protein-coupled receptor GPRC6A at the surface of Leydig cells, initiating a signaling response that promotes the expression of enzymes required for testosterone synthesis in a CREB-dependent manner. Also acts as a regulator of brain development: osteocalcin hormone crosses the blood-brain barrier and acts as a ligand for GPR158 on neurons, initiating a signaling response that prevents neuronal apoptosis in the hippocampus, favors the synthesis of all monoamine neurotransmitters and inhibits that of gamma-aminobutyric acid (GABA). Osteocalcin also crosses the placenta during pregnancy and maternal osteocalcin is required for fetal brain development. In Oryctolagus cuniculus (Rabbit), this protein is Osteocalcin (BGLAP).